The primary structure comprises 88 residues: RNA-binding protein Hfq (88 aa).

One can recognise a Sm domain in the interval 9 to 68 (DPYLNVLRKERVPVSIYLVNGIKLQGQVESFDQFVVLLKNTVSQMVYKHAISTVVPSRAV).

It belongs to the Hfq family. As to quaternary structure, homohexamer.

Its function is as follows. RNA chaperone that binds small regulatory RNA (sRNAs) and mRNAs to facilitate mRNA translational regulation in response to envelope stress, environmental stress and changes in metabolite concentrations. Also binds with high specificity to tRNAs. This chain is RNA-binding protein Hfq, found in Cellvibrio japonicus (strain Ueda107) (Pseudomonas fluorescens subsp. cellulosa).